The following is a 351-amino-acid chain: Peptide chain release factor 1 (351 aa).

N5-methylglutamine is present on Gln-229. Residues 278-297 form a disordered region; sequence RVDDERSADRAAQVGSGDRS.

Belongs to the prokaryotic/mitochondrial release factor family. Methylated by PrmC. Methylation increases the termination efficiency of RF1.

It localises to the cytoplasm. Functionally, peptide chain release factor 1 directs the termination of translation in response to the peptide chain termination codons UAG and UAA. In Roseobacter denitrificans (strain ATCC 33942 / OCh 114) (Erythrobacter sp. (strain OCh 114)), this protein is Peptide chain release factor 1.